The primary structure comprises 386 residues: Sphingosine 1-phosphate receptor 4 (386 aa).

The Extracellular segment spans residues 1 to 56 (MNISTWSTLVTPESCHRLAASGHSLLIVLHYNHSGRLASRGGSEDGGGLGMLRGPS). 2 N-linked (GlcNAc...) asparagine glycosylation sites follow: asparagine 2 and asparagine 32. The chain crosses the membrane as a helical span at residues 57 to 77 (VAAGCLVVLENAMVLAAIAIY). Residues 78 to 87 (MRSRRWVYYC) are Cytoplasmic-facing. Residues 88-108 (LLNITLSDLLTGLAYVVNVLL) traverse the membrane as a helical segment. The Extracellular segment spans residues 109 to 120 (SGTRTFQLSPVH). Residues 121–141 (WFLREGLLFMALAASTFSLLF) form a helical membrane-spanning segment. At 142–163 (TAGERFATMVRVAESGATKTSR) the chain is on the cytoplasmic side. Residues 164–184 (VYGCIGLCWLLAAILGLLPLL) traverse the membrane as a helical segment. Residues 185 to 208 (GWNCVCAFPRCSSLLPLYSKGYVL) are Extracellular-facing. A helical transmembrane segment spans residues 209 to 229 (FCVVVFALILVAILSLYGAIF). The Cytoplasmic segment spans residues 230-254 (RVVRANGQKSPRPPARRKSRRLLNT). A helical transmembrane segment spans residues 255–275 (VLMILVAFVVCWGPLFGLLLA). Residues 276 to 290 (DIFGSNVWAQEYLRG) lie on the Extracellular side of the membrane. Residues 291-311 (MDWILALAVFNSAINPLIYSF) form a helical membrane-spanning segment. At 312–386 (RSREVQRAVL…LSSISSVRST (75 aa)) the chain is on the cytoplasmic side. Residue cysteine 325 is the site of S-palmitoyl cysteine attachment.

Belongs to the G-protein coupled receptor 1 family. Specifically expressed in fetal and adult lymphoid and hematopoietic tissue. Expressed in lung, spleen, thymus and lymph node but absent in other non-lymphatic tissue. Coexpressed with GNA15 at the same relative levels in all tissues examined, with the highest levels in adult spleen and lung.

It is found in the cell membrane. Functionally, receptor for the lysosphingolipid sphingosine 1-phosphate (S1P). S1P is a bioactive lysophospholipid that elicits diverse physiological effect on most types of cells and tissues. May be involved in cell migration processes that are specific for lymphocytes. The polypeptide is Sphingosine 1-phosphate receptor 4 (S1pr4) (Mus musculus (Mouse)).